A 256-amino-acid chain; its full sequence is Acetoacetate decarboxylase 3 (256 aa).

Lys-110 functions as the Schiff-base intermediate with acetoacetate in the catalytic mechanism.

Belongs to the ADC family.

The enzyme catalyses acetoacetate + H(+) = acetone + CO2. Catalyzes the conversion of acetoacetate to acetone and carbon dioxide. The polypeptide is Acetoacetate decarboxylase 3 (Mesorhizobium japonicum (strain LMG 29417 / CECT 9101 / MAFF 303099) (Mesorhizobium loti (strain MAFF 303099))).